The following is an 891-amino-acid chain: Alanine--tRNA ligase (891 aa).

Positions 564, 568, 681, and 685 each coordinate Zn(2+).

It belongs to the class-II aminoacyl-tRNA synthetase family. It depends on Zn(2+) as a cofactor.

The protein localises to the cytoplasm. The enzyme catalyses tRNA(Ala) + L-alanine + ATP = L-alanyl-tRNA(Ala) + AMP + diphosphate. Functionally, catalyzes the attachment of alanine to tRNA(Ala) in a two-step reaction: alanine is first activated by ATP to form Ala-AMP and then transferred to the acceptor end of tRNA(Ala). Also edits incorrectly charged Ser-tRNA(Ala) and Gly-tRNA(Ala) via its editing domain. This Methylorubrum extorquens (strain PA1) (Methylobacterium extorquens) protein is Alanine--tRNA ligase.